The chain runs to 562 residues: Adenylate kinase isoenzyme 5 (562 aa).

Adenylate kinase regions lie at residues 133-316 (KIIL…MAVD) and 377-559 (KIIF…TAID). 142-147 (GSGKGT) contacts ATP. The tract at residues 162–193 (SVGELLRKKIHSTSSNRKWSLIAKIITTGELA) is NMP 1. AMP is bound by residues R168, 191–193 (ELA), 219–222 (GFPR), and Q226. Residues 256 to 266 (KRAEQQGRPDD) form an LID 1 region. R257 provides a ligand contact to ATP. Positions 263 and 274 each coordinate AMP. Residue 386-391 (GSGKGT) coordinates ATP. The tract at residues 406–435 (STGELLREELASESERSKLIRDIMERGDLV) is NMP 2. Residues T407, R412, 433–435 (DLV), 462–465 (GYPR), and Q469 each bind AMP. Residues 499-509 (QRSRSSLPVDD) are LID 2. An ATP-binding site is contributed by R500. Position 517 (R517) interacts with AMP. G545 is an ATP binding site.

It belongs to the adenylate kinase family. As to quaternary structure, monomer. Interacts with YWHAZ. Brain specific.

It localises to the cytoplasm. The catalysed reaction is AMP + ATP = 2 ADP. The enzyme catalyses a 2'-deoxyribonucleoside 5'-diphosphate + ATP = a 2'-deoxyribonucleoside 5'-triphosphate + ADP. It catalyses the reaction a ribonucleoside 5'-diphosphate + ATP = a ribonucleoside 5'-triphosphate + ADP. In terms of biological role, nucleoside monophosphate (NMP) kinase that catalyzes the reversible transfer of the terminal phosphate group between nucleoside triphosphates and monophosphates. Active on AMP and dAMP with ATP as a donor. When GTP is used as phosphate donor, the enzyme phosphorylates AMP, CMP, and to a small extent dCMP. Also displays broad nucleoside diphosphate kinase activity. In Homo sapiens (Human), this protein is Adenylate kinase isoenzyme 5 (AK5).